A 235-amino-acid chain; its full sequence is uncharacterized protein (235 aa).

The first 24 residues, 1–24, serve as a signal peptide directing secretion; that stretch reads MSDRMKLKGLLAFCLLFLSSFVLA.

This is an uncharacterized protein from Haemophilus influenzae (strain ATCC 51907 / DSM 11121 / KW20 / Rd).